We begin with the raw amino-acid sequence, 631 residues long: tRNA uridine 5-carboxymethylaminomethyl modification enzyme MnmG (631 aa).

FAD contacts are provided by residues 13–18 (GGGHAG), Val-125, and Ser-180. 273 to 287 (GPRYCPSIEDKVNRY) serves as a coordination point for NAD(+). FAD is bound at residue Gln-370.

Belongs to the MnmG family. Homodimer. Heterotetramer of two MnmE and two MnmG subunits. FAD is required as a cofactor.

Its subcellular location is the cytoplasm. NAD-binding protein involved in the addition of a carboxymethylaminomethyl (cmnm) group at the wobble position (U34) of certain tRNAs, forming tRNA-cmnm(5)s(2)U34. This chain is tRNA uridine 5-carboxymethylaminomethyl modification enzyme MnmG, found in Alcanivorax borkumensis (strain ATCC 700651 / DSM 11573 / NCIMB 13689 / SK2).